A 289-amino-acid chain; its full sequence is MEANVTIPIWQNKPHGAARSVVRRIGTNLPLKPCPRASFETLPNISDLCLKDVPPVPTLADIAWIAADEEETYARVRSDTRPLRHTWKPSPLIVMQRNASVPNLRGSEERLLALKKPALPALSRTTELQDELSHLRSQIAKIVAADAASASLTPDFLSSGSSNVSSPLPCFGSSFHSTTSFVISDITEETEVEVPELPTIPLLCSASPECCKSEHKTTCSSSEEDDCISLSKASSFADMMGILKDFHRIKQSQDLSRSLLKEEDPAVLISEVLRRKFALKEEDISRKGN.

T27 carries the post-translational modification Phosphothreonine. Residues S38, S100, S107, S221, S222, S235, S258, and S270 each carry the phosphoserine modification.

The protein belongs to the MTFR1 family. Phosphorylated by AMPK. Upon stress, phosphorylation by AMPK is sufficient to induce mitochondrial fragmentation.

Its subcellular location is the mitochondrion outer membrane. Functionally, mitochondrial protein required for adaptation of miochondrial dynamics to metabolic changes. Regulates mitochondrial morphology at steady state and mediates AMPK-dependent stress-induced mitochondrial fragmentation via the control of OPA1 levels. The chain is Mitochondrial fission regulator 1-like (Mtfr1l) from Rattus norvegicus (Rat).